We begin with the raw amino-acid sequence, 449 residues long: Na(+)-translocating NADH-quinone reductase subunit A (449 aa).

The protein belongs to the NqrA family. In terms of assembly, composed of six subunits; NqrA, NqrB, NqrC, NqrD, NqrE and NqrF.

The catalysed reaction is a ubiquinone + n Na(+)(in) + NADH + H(+) = a ubiquinol + n Na(+)(out) + NAD(+). Functionally, NQR complex catalyzes the reduction of ubiquinone-1 to ubiquinol by two successive reactions, coupled with the transport of Na(+) ions from the cytoplasm to the periplasm. NqrA to NqrE are probably involved in the second step, the conversion of ubisemiquinone to ubiquinol. This Actinobacillus pleuropneumoniae serotype 3 (strain JL03) protein is Na(+)-translocating NADH-quinone reductase subunit A.